We begin with the raw amino-acid sequence, 410 residues long: MPHSTNKELILGIMAGTAGISLLAFWYHKVLKPRTTMNFPKLLSLGKKFGSLTLPEESHSAQGASVVFQRRQLQILEKLNELLTNMEELKEEIRFLKETIPKLEECIQDEFGGKVTVHKISPQHRARKKKGTTVQRSATSNSSEEAESEGGYITANTDTEEQNFPFPKALNTHIEELKLDVLLQKADHLRTNESHKMESFELLCDHKEKFSEETEFLWRLARAYGDMYDLSTSTQEKKHYANIGKTLGERAITRAPMNGHCHLWYAVLCGYVSEFEGLQNKINCGHLFKKHLEIAIQLLPEEPLLYYLKGRYCYTVSRLSWIEKKMAATLFGEIPYSTVHEALHNFLKTEELQPGYSMSNYMYTAKCYVELGEPQEACKFCNLALLLPVVTKEDKDAHKEVKKMISSLKR.

The helical transmembrane segment at 9 to 28 threads the bilayer; that stretch reads LILGIMAGTAGISLLAFWYH. The residue at position 51 (Ser-51) is a Phosphoserine. The stretch at 69-110 forms a coiled coil; that stretch reads QRRQLQILEKLNELLTNMEELKEEIRFLKETIPKLEECIQDE. A disordered region spans residues 120–151; it reads ISPQHRARKKKGTTVQRSATSNSSEEAESEGG. Ser-121 bears the Phosphoserine mark. Basic residues predominate over residues 121–131; the sequence is SPQHRARKKKG. Thr-139 is modified (phosphothreonine). Tyr-152 carries the phosphotyrosine modification. 2 positions are modified to phosphothreonine: Thr-154 and Thr-157.

Belongs to the RMDN family. In terms of assembly, interacts with microtubules.

It is found in the membrane. The protein localises to the cytoplasm. It localises to the cytoskeleton. The protein resides in the spindle. Its subcellular location is the spindle pole. The protein is Regulator of microtubule dynamics protein 2 (Rmdn2) of Mus musculus (Mouse).